A 339-amino-acid polypeptide reads, in one-letter code: DNA-directed RNA polymerase subunit alpha (339 aa).

The segment at 1 to 233 is alpha N-terminal domain (alpha-NTD); it reads MVREEVAGST…DLFLPFLHAE (233 aa). Residues 264–339 are alpha C-terminal domain (alpha-CTD); that stretch reads KKGIPLNCIF…IDLLKNKLSF (76 aa).

Belongs to the RNA polymerase alpha chain family. As to quaternary structure, in plastids the minimal PEP RNA polymerase catalytic core is composed of four subunits: alpha, beta, beta', and beta''. When a (nuclear-encoded) sigma factor is associated with the core the holoenzyme is formed, which can initiate transcription.

Its subcellular location is the plastid. It is found in the chloroplast. It carries out the reaction RNA(n) + a ribonucleoside 5'-triphosphate = RNA(n+1) + diphosphate. In terms of biological role, DNA-dependent RNA polymerase catalyzes the transcription of DNA into RNA using the four ribonucleoside triphosphates as substrates. The polypeptide is DNA-directed RNA polymerase subunit alpha (Aegilops uniaristata (Goatgrass)).